The following is an 81-amino-acid chain: Photosystem I iron-sulfur center (81 aa).

4Fe-4S ferredoxin-type domains are found at residues serine 2–tryptophan 31 and isoleucine 39–tyrosine 68. Residues cysteine 11, cysteine 14, cysteine 17, cysteine 21, cysteine 48, cysteine 51, cysteine 54, and cysteine 58 each coordinate [4Fe-4S] cluster.

In terms of assembly, the eukaryotic PSI reaction center is composed of at least 11 subunits. [4Fe-4S] cluster serves as cofactor.

Its subcellular location is the plastid. The protein localises to the chloroplast thylakoid membrane. The catalysed reaction is reduced [plastocyanin] + hnu + oxidized [2Fe-2S]-[ferredoxin] = oxidized [plastocyanin] + reduced [2Fe-2S]-[ferredoxin]. Its function is as follows. Apoprotein for the two 4Fe-4S centers FA and FB of photosystem I (PSI); essential for photochemical activity. FB is the terminal electron acceptor of PSI, donating electrons to ferredoxin. The C-terminus interacts with PsaA/B/D and helps assemble the protein into the PSI complex. Required for binding of PsaD and PsaE to PSI. PSI is a plastocyanin/cytochrome c6-ferredoxin oxidoreductase, converting photonic excitation into a charge separation, which transfers an electron from the donor P700 chlorophyll pair to the spectroscopically characterized acceptors A0, A1, FX, FA and FB in turn. In Ostreococcus tauri, this protein is Photosystem I iron-sulfur center.